Reading from the N-terminus, the 127-residue chain is Aspartate 1-decarboxylase (127 aa).

Ser-25 acts as the Schiff-base intermediate with substrate; via pyruvic acid in catalysis. Ser-25 bears the Pyruvic acid (Ser) mark. Thr-57 lines the substrate pocket. The active-site Proton donor is Tyr-58. 73–75 is a binding site for substrate; it reads GAA.

It belongs to the PanD family. In terms of assembly, heterooctamer of four alpha and four beta subunits. The cofactor is pyruvate. Is synthesized initially as an inactive proenzyme, which is activated by self-cleavage at a specific serine bond to produce a beta-subunit with a hydroxyl group at its C-terminus and an alpha-subunit with a pyruvoyl group at its N-terminus.

The protein resides in the cytoplasm. The enzyme catalyses L-aspartate + H(+) = beta-alanine + CO2. Its pathway is cofactor biosynthesis; (R)-pantothenate biosynthesis; beta-alanine from L-aspartate: step 1/1. Its function is as follows. Catalyzes the pyruvoyl-dependent decarboxylation of aspartate to produce beta-alanine. The protein is Aspartate 1-decarboxylase of Exiguobacterium sibiricum (strain DSM 17290 / CCUG 55495 / CIP 109462 / JCM 13490 / 255-15).